A 337-amino-acid chain; its full sequence is Inositol 2-dehydrogenase 1 (337 aa).

Belongs to the Gfo/Idh/MocA family. Homotetramer.

It carries out the reaction myo-inositol + NAD(+) = scyllo-inosose + NADH + H(+). In terms of biological role, involved in the oxidation of myo-inositol (MI) to 2-keto-myo-inositol (2KMI or 2-inosose). The sequence is that of Inositol 2-dehydrogenase 1 from Saccharopolyspora erythraea (strain ATCC 11635 / DSM 40517 / JCM 4748 / NBRC 13426 / NCIMB 8594 / NRRL 2338).